The chain runs to 238 residues: Large ribosomal subunit protein uL1 (238 aa).

Residues 217–238 form a disordered region; the sequence is TNGPGVPVDETIQKNYADDAEA.

It belongs to the universal ribosomal protein uL1 family. Part of the 50S ribosomal subunit.

In terms of biological role, binds directly to 23S rRNA. The L1 stalk is quite mobile in the ribosome, and is involved in E site tRNA release. Functionally, protein L1 is also a translational repressor protein, it controls the translation of the L11 operon by binding to its mRNA. The protein is Large ribosomal subunit protein uL1 of Corynebacterium urealyticum (strain ATCC 43042 / DSM 7109).